A 181-amino-acid polypeptide reads, in one-letter code: Organelle RRM domain-containing protein 6, chloroplastic (181 aa).

A chloroplast-targeting transit peptide spans 1-44 (MAISLGRVVVPSCTISGDRLFIPNFSAICSVSCGRINVGTGVIS). One can recognise an RRM domain in the interval 77–155 (TKLYVSGLSF…RVIFVEEAKT (79 aa)). A compositionally biased stretch (basic and acidic residues) spans 155–169 (TRSDMSRAKPRRDFP). The interval 155-181 (TRSDMSRAKPRRDFPKPQSKPRTFRTW) is disordered.

In terms of assembly, interacts with MORF8/RIP1, MORF2/RIP2, MORF9/RIP9 and VAR3/OZ1.

Its subcellular location is the plastid. It is found in the chloroplast. Involved in C-to-U editing of chloroplastic RNA. Required for the photosynthetic subunit psbF transcript editing in chloroplast. This chain is Organelle RRM domain-containing protein 6, chloroplastic, found in Arabidopsis thaliana (Mouse-ear cress).